Here is a 181-residue protein sequence, read N- to C-terminus: MTANRKELAVERAAKKEAVEQLNGVFKTTSVAVVAQYSGLTVAQMQKLRQQMKQAGASVKVSKNRLAKIALEGTDVVAIGPMLKGPTVIATSNDPVAAPKVAIEFAKANEKFVIVGGSMGKTVLNVDGVKALASLPSLDELRGKIVGLIVAPATKLAQLANAPAGKLARVIQAHASKGEAA.

This sequence belongs to the universal ribosomal protein uL10 family. In terms of assembly, part of the ribosomal stalk of the 50S ribosomal subunit. The N-terminus interacts with L11 and the large rRNA to form the base of the stalk. The C-terminus forms an elongated spine to which L12 dimers bind in a sequential fashion forming a multimeric L10(L12)X complex.

Forms part of the ribosomal stalk, playing a central role in the interaction of the ribosome with GTP-bound translation factors. The protein is Large ribosomal subunit protein uL10 of Bradyrhizobium diazoefficiens (strain JCM 10833 / BCRC 13528 / IAM 13628 / NBRC 14792 / USDA 110).